The sequence spans 383 residues: Succinyl-diaminopimelate desuccinylase (383 aa).

A Zn(2+)-binding site is contributed by H73. D75 is an active-site residue. Position 107 (D107) interacts with Zn(2+). The active-site Proton acceptor is the E141. Zn(2+)-binding residues include E142, E170, and H356.

It belongs to the peptidase M20A family. DapE subfamily. Homodimer. It depends on Zn(2+) as a cofactor. Requires Co(2+) as cofactor.

It catalyses the reaction N-succinyl-(2S,6S)-2,6-diaminopimelate + H2O = (2S,6S)-2,6-diaminopimelate + succinate. Its pathway is amino-acid biosynthesis; L-lysine biosynthesis via DAP pathway; LL-2,6-diaminopimelate from (S)-tetrahydrodipicolinate (succinylase route): step 3/3. Its function is as follows. Catalyzes the hydrolysis of N-succinyl-L,L-diaminopimelic acid (SDAP), forming succinate and LL-2,6-diaminopimelate (DAP), an intermediate involved in the bacterial biosynthesis of lysine and meso-diaminopimelic acid, an essential component of bacterial cell walls. The protein is Succinyl-diaminopimelate desuccinylase of Pseudomonas aeruginosa (strain ATCC 15692 / DSM 22644 / CIP 104116 / JCM 14847 / LMG 12228 / 1C / PRS 101 / PAO1).